Reading from the N-terminus, the 226-residue chain is Peroxiredoxin-like 2C (226 aa).

Belongs to the peroxiredoxin-like PRXL2 family. PRXL2C subfamily. Expressed in gastric tissues.

In terms of biological role, may positively regulate ERK1/2 signaling and AKT1 activation leading to HIF1A up-regulation with an increased expression of glycolysis genes and enhanced glycolysis. This Homo sapiens (Human) protein is Peroxiredoxin-like 2C.